The primary structure comprises 414 residues: Ribulose bisphosphate carboxylase large chain (414 aa).

Residues Asn-102 and Thr-152 each coordinate substrate. The active-site Proton acceptor is Lys-154. Lys-156 is a binding site for substrate. Mg(2+)-binding residues include Lys-180, Asp-182, and Glu-183. Position 180 is an N6-carboxylysine (Lys-180). The Proton acceptor role is filled by His-273. 3 residues coordinate substrate: Arg-274, His-306, and Ser-358.

This sequence belongs to the RuBisCO large chain family. Type I subfamily. In terms of assembly, heterohexadecamer of 8 large chains and 8 small chains; disulfide-linked. The disulfide link is formed within the large subunit homodimers. The cofactor is Mg(2+). The disulfide bond which can form in the large chain dimeric partners within the hexadecamer appears to be associated with oxidative stress and protein turnover.

The protein resides in the plastid. It localises to the chloroplast. It catalyses the reaction 2 (2R)-3-phosphoglycerate + 2 H(+) = D-ribulose 1,5-bisphosphate + CO2 + H2O. The catalysed reaction is D-ribulose 1,5-bisphosphate + O2 = 2-phosphoglycolate + (2R)-3-phosphoglycerate + 2 H(+). In terms of biological role, ruBisCO catalyzes two reactions: the carboxylation of D-ribulose 1,5-bisphosphate, the primary event in carbon dioxide fixation, as well as the oxidative fragmentation of the pentose substrate in the photorespiration process. Both reactions occur simultaneously and in competition at the same active site. This is Ribulose bisphosphate carboxylase large chain (rbcL) from Antrophyum reticulatum (Ox-tongue fern).